Here is a 563-residue protein sequence, read N- to C-terminus: Arginine--tRNA ligase (563 aa).

The 'HIGH' region signature appears at 121 to 131 (PNIAKPFSIGH).

Belongs to the class-I aminoacyl-tRNA synthetase family. In terms of assembly, monomer.

It is found in the cytoplasm. It catalyses the reaction tRNA(Arg) + L-arginine + ATP = L-arginyl-tRNA(Arg) + AMP + diphosphate. The sequence is that of Arginine--tRNA ligase from Streptococcus pneumoniae (strain P1031).